We begin with the raw amino-acid sequence, 525 residues long: GMP synthase [glutamine-hydrolyzing] (525 aa).

Residues 9-207 (KILILDFGSQ…IVDICGCDTL (199 aa)) enclose the Glutamine amidotransferase type-1 domain. Cysteine 86 acts as the Nucleophile in catalysis. Residues histidine 181 and glutamate 183 contribute to the active site. The region spanning 208 to 400 (WTPANIAQDA…LGLPYDMVYR (193 aa)) is the GMPS ATP-PPase domain. Residue 235–241 (SGGVDSS) participates in ATP binding.

Homodimer.

It catalyses the reaction XMP + L-glutamine + ATP + H2O = GMP + L-glutamate + AMP + diphosphate + 2 H(+). It participates in purine metabolism; GMP biosynthesis; GMP from XMP (L-Gln route): step 1/1. Catalyzes the synthesis of GMP from XMP. This chain is GMP synthase [glutamine-hydrolyzing], found in Marinomonas sp. (strain MWYL1).